Consider the following 342-residue polypeptide: Ferredoxin--NADP reductase (342 aa).

Cys-17, Asp-36, Gln-44, Tyr-49, Val-89, Phe-124, Asp-289, and Thr-330 together coordinate FAD.

The protein belongs to the ferredoxin--NADP reductase type 2 family. In terms of assembly, homodimer. It depends on FAD as a cofactor.

The enzyme catalyses 2 reduced [2Fe-2S]-[ferredoxin] + NADP(+) + H(+) = 2 oxidized [2Fe-2S]-[ferredoxin] + NADPH. This Nitrobacter hamburgensis (strain DSM 10229 / NCIMB 13809 / X14) protein is Ferredoxin--NADP reductase.